A 229-amino-acid chain; its full sequence is Potassium/proton antiporter CemA (229 aa).

Transmembrane regions (helical) follow at residues 7-27 (FNPL…SFSF), 107-127 (ILNF…YILG), 154-174 (ILLL…ELMI), and 189-209 (IISG…KYLI).

This sequence belongs to the CemA family.

It is found in the plastid. The protein resides in the chloroplast inner membrane. The enzyme catalyses K(+)(in) + H(+)(out) = K(+)(out) + H(+)(in). Its function is as follows. Contributes to K(+)/H(+) antiport activity by supporting proton efflux to control proton extrusion and homeostasis in chloroplasts in a light-dependent manner to modulate photosynthesis. Prevents excessive induction of non-photochemical quenching (NPQ) under continuous-light conditions. Indirectly promotes efficient inorganic carbon uptake into chloroplasts. The protein is Potassium/proton antiporter CemA of Ranunculus macranthus (Large buttercup).